The primary structure comprises 719 residues: Phenylalanine--tRNA ligase beta subunit, chloroplastic (719 aa).

Positions 318 to 403 (DHALNINLSI…RIYGYHKFRS (86 aa)) constitute a B5 domain. Mg(2+) is bound by residues aspartate 381, aspartate 387, glutamate 390, and glutamate 391. The region spanning 625-718 (SKYPSIIRDL…IVKQLNLKIR (94 aa)) is the FDX-ACB domain.

This sequence belongs to the phenylalanyl-tRNA synthetase beta subunit family. Type 1 subfamily. As to quaternary structure, tetramer of two alpha and two beta subunits. Mg(2+) serves as cofactor.

Its subcellular location is the plastid. It localises to the chloroplast. The catalysed reaction is tRNA(Phe) + L-phenylalanine + ATP = L-phenylalanyl-tRNA(Phe) + AMP + diphosphate + H(+). The polypeptide is Phenylalanine--tRNA ligase beta subunit, chloroplastic (Pyropia yezoensis (Susabi-nori)).